Reading from the N-terminus, the 1147-residue chain is Cellulose synthase-like protein D3 (1147 aa).

Disordered regions lie at residues Met-1–Gln-33 and Lys-259–Pro-281. Composition is skewed to gly residues over residues Gly-14 to Gly-29 and Gly-262 to Pro-272. The next 2 helical transmembrane spans lie at Val-292–Thr-312 and Ala-322–Leu-342. Residues Asp-422 and Asp-847 contribute to the active site. 6 consecutive transmembrane segments (helical) span residues Ile-929–Val-949, Ile-954–Glu-974, Leu-1001–Leu-1021, Leu-1045–Ala-1065, Trp-1075–Phe-1095, and Thr-1108–Ile-1128.

Belongs to the glycosyltransferase 2 family. Plant cellulose synthase-like D subfamily.

Its subcellular location is the golgi apparatus membrane. In terms of biological role, thought to be a Golgi-localized beta-glycan synthase that polymerize the backbones of noncellulosic polysaccharides (hemicelluloses) of plant cell wall. This Oryza sativa subsp. japonica (Rice) protein is Cellulose synthase-like protein D3 (CSLD3).